The following is a 141-amino-acid chain: Hemoglobin subunit alpha-A (141 aa).

Positions 1–141 constitute a Globin domain; that stretch reads VLSANDKTNV…VGNVLSAKYR (141 aa). Histidine 58 is an O2 binding site. Residue histidine 87 coordinates heme b.

This sequence belongs to the globin family. As to quaternary structure, heterotetramer of two alpha chains and two beta chains. Red blood cells.

Functionally, involved in oxygen transport from the lung to the various peripheral tissues. This chain is Hemoglobin subunit alpha-A (HBAA), found in Trigonoceps occipitalis (White-headed vulture).